The primary structure comprises 381 residues: MGCLGGNSKTTEDQGVDEKERREANKKIEKQLQKERLAYKATHRLLLLGAGESGKSTIVKQMRILHVNGFNPEEKKQKILDIRKNVKDAIVTIVSAMSTIIPPVPLANPENQFRSDYIKSIAPITDFEYSQEFFDHVKKLWDDEGVKACFERSNEYQLIDCAQYFLERIDSVSLVDYTPTDQDLLRCRVLTSGIFETRFQVDKVNFHMFDVGGQRDERRKWIQCFNDVTAIIYVAACSSYNMVIREDNNTNRLRESLDLFESIWNNRWLRTISIILFLNKQDMLAEKVLAGKSKIEDYFPEYANYTVPEDATPDAGEDPKVTRAKFFIRDLFLRISTATGDGKHYCYPHFTCAVDTENIRRVFNDCRDIIQRMHLKQYELL.

The interval 1 to 25 is disordered; it reads MGCLGGNSKTTEDQGVDEKERREAN. Glycine 2 carries N-palmitoyl glycine lipidation. Cysteine 3 carries S-palmitoyl cysteine lipidation. Residues 10–25 show a composition bias toward basic and acidic residues; the sequence is TTEDQGVDEKERREAN. The G-alpha domain maps to 41–381; it reads ATHRLLLLGA…RMHLKQYELL (341 aa). The segment at 44–57 is G1 motif; the sequence is RLLLLGAGESGKST. Residues glutamate 52, serine 53, glycine 54, lysine 55, serine 56, and threonine 57 each contribute to the GTP site. A Mg(2+)-binding site is contributed by serine 56. Threonine 178 carries the phosphothreonine modification. The tract at residues 183 to 191 is G2 motif; the sequence is DLLRCRVLT. GTP-binding residues include leucine 185 and arginine 186. Arginine 188 is subject to ADP-ribosylarginine; by cholera toxin. Threonine 191 contributes to the GTP binding site. The Mg(2+) site is built by threonine 191 and aspartate 210. A G3 motif region spans residues 206 to 215; that stretch reads FHMFDVGGQR. Glycine 213, asparagine 279, lysine 280, aspartate 282, and alanine 353 together coordinate GTP. The G4 motif stretch occupies residues 275–282; the sequence is ILFLNKQD. The tract at residues 351 to 356 is G5 motif; sequence TCAVDT.

It belongs to the G-alpha family. G(s) subfamily. As to quaternary structure, g proteins are composed of 3 units; alpha, beta and gamma. The alpha chain contains the guanine nucleotide binding site. Interacts with GAS2L2. Interacts (GDP-bound form) with RIC8B (via C-terminus); promoting GNAL folding and association with the plasma membrane. As to expression, detected in olfactory neuroepithelium, brain, testis, and to a lower extent in retina, lung alveoli, spleen. Trace amounts where seen in kidney, adrenal gland and liver. Found to be expressed in all the insulinomas examined.

It is found in the cell membrane. The enzyme catalyses GTP + H2O = GDP + phosphate + H(+). Guanine nucleotide-binding protein (G protein) involved as transducer in olfactory signal transduction controlled by G protein-coupled receptors (GPCRs). Contains the guanine nucleotide binding site and alternates between an active, GTP-bound state and an inactive, GDP-bound state. Signaling by an activated GPCR promotes GDP release and GTP binding. The alpha subunit has a low GTPase activity that converts bound GTP to GDP, thereby terminating the signal. Both GDP release and GTP hydrolysis are modulated by numerous regulatory proteins. GNAL/G(olf) alpha specifically mediates olfactory signal transduction within the olfactory neuroepithelium and the basal ganglia following GPCRs activation. Acts by promoting the specific activation of adenylyl cyclase ADCY3, resulting in increased levels of the signaling molecule cAMP. The chain is Guanine nucleotide-binding protein G(olf) subunit alpha from Homo sapiens (Human).